We begin with the raw amino-acid sequence, 71 residues long: Prokaryotic ubiquitin-like protein Pup (71 aa).

Residues 1–30 (MPSASGHHQIPAETQRHDDDQTQETAQGLS) form a disordered region. Positions 23–56 (QETAQGLSAAAMLAQEQADDLDAILDDIETVLET) form a coiled coil. The ARC ATPase binding stretch occupies residues 27–65 (QGLSAAAMLAQEQADDLDAILDDIETVLETNAEEYVSSF). E71 participates in a covalent cross-link: Isoglutamyl lysine isopeptide (Glu-Lys) (interchain with K-? in acceptor proteins).

Belongs to the prokaryotic ubiquitin-like protein family. Strongly interacts with the proteasome-associated ATPase ARC through a hydrophobic interface; the interacting region of Pup lies in its C-terminal half. There is one Pup binding site per ARC hexamer ring.

It participates in protein degradation; proteasomal Pup-dependent pathway. Its function is as follows. Protein modifier that is covalently attached to lysine residues of substrate proteins, thereby targeting them for proteasomal degradation. The tagging system is termed pupylation. The protein is Prokaryotic ubiquitin-like protein Pup of Bifidobacterium animalis subsp. lactis (strain AD011).